Consider the following 876-residue polypeptide: MQEQYRPAAIEPAAQKKWDDARIFNVSEDASKPKYYCLSMFPYPSGKLHMGHVRNYTIGDVLSRFKLLNGFNVMQPMGWDAFGMPAENAAMKNNVAPAAWTYDNIEYMKTQLKSLGFAIDWARETATCKPEYYRWEQWLFTKLFEKGIVYRKNGTVNWDPVDQTVLANEQVIDGRGWRSGALIEKREIPMYYFKITDYAEELLNDLDKLEHWPEQVKTMQRNWIGKSRGMTVRFAVSDDSKQGLEGDYAKFLQVYTTRPDTLMGATYVAVAAEHPLAAAAAADKPELQAFIAECKAGSVAEADMATMEKKGVPTGRYVVNPLNGDKLEVWIANYVLWGYGDGAVMAVPAHDERDFEFATKYNLPKKQVIAVGDNAFDENQWQEWYGDKENGVLVNSGDLDGLDFQTAFDAVAAKLQSQGAGEPKTQYRLRDWGISRQRYWGCPIPIVHCEQCGDVPVPADQLPVVLPENVVPDGMGSPLAKMPEFYETACPCCGGAAKRETDTMDTFMESSWYFFRYMSPKFSDGMVDPAAAKYWGAVDQYIGGIEHAILHLLYARFFTKLMRDEGLVNVDEPFERLLTQGMVVCETYYRENDKGGKDWINPADVELTFDDKGRPISAVLKADGLPVVISGTEKMSKSKNNGVDPQELINAYGADTARLFMMFAAPPEQSLEWSDSGVEGAHRFLRRLWRTVYEYLKQGEAVKAFAGSQDGLSKELKDLRHKLHATTAKVSDDYGRRQQFNTAIAAVMELLNQYDKTDTGGEQGRAVAQEVLETAVRLLWPIVPHICETLWSELNGAKLWEAGWPTVDEAALVKSEIEVMVQVNGKLRGKITVAADASKADLEAAALATEGAVKFMEGKPAKKIIVVPGRLVNIVV.

The 'HIGH' region motif lies at 42-52 (PYPSGKLHMGH). Positions 634 to 638 (KMSKS) match the 'KMSKS' region motif. An ATP-binding site is contributed by Lys-637.

It belongs to the class-I aminoacyl-tRNA synthetase family.

Its subcellular location is the cytoplasm. The catalysed reaction is tRNA(Leu) + L-leucine + ATP = L-leucyl-tRNA(Leu) + AMP + diphosphate. The protein is Leucine--tRNA ligase of Neisseria meningitidis serogroup B (strain ATCC BAA-335 / MC58).